The following is a 663-amino-acid chain: DNA topoisomerase 4 subunit B (663 aa).

Residues Tyr-21, Asn-61, Asp-88, 130–136 (GLHGVGI), and Lys-360 contribute to the ATP site. Residues 440–554 (TELFIVEGDS…EGHLYLAKPP (115 aa)) form the Toprim domain. Mg(2+) contacts are provided by Glu-446, Asp-519, and Asp-521.

It belongs to the type II topoisomerase family. ParE type 1 subfamily. As to quaternary structure, heterotetramer composed of ParC and ParE. Requires Mg(2+) as cofactor. Mn(2+) is required as a cofactor. The cofactor is Ca(2+).

It catalyses the reaction ATP-dependent breakage, passage and rejoining of double-stranded DNA.. Topoisomerase IV is essential for chromosome segregation. It relaxes supercoiled DNA. Performs the decatenation events required during the replication of a circular DNA molecule. In Rickettsia typhi (strain ATCC VR-144 / Wilmington), this protein is DNA topoisomerase 4 subunit B.